The chain runs to 436 residues: Histidinol dehydrogenase (436 aa).

The NAD(+) site is built by Tyr135, Gln196, and Asn219. Substrate-binding residues include Ser242, Gln264, and His267. Residues Gln264 and His267 each contribute to the Zn(2+) site. Active-site proton acceptor residues include Glu332 and His333. The substrate site is built by His333, Asp366, Glu420, and His425. Asp366 provides a ligand contact to Zn(2+). His425 contacts Zn(2+).

This sequence belongs to the histidinol dehydrogenase family. Zn(2+) is required as a cofactor.

The enzyme catalyses L-histidinol + 2 NAD(+) + H2O = L-histidine + 2 NADH + 3 H(+). The protein operates within amino-acid biosynthesis; L-histidine biosynthesis; L-histidine from 5-phospho-alpha-D-ribose 1-diphosphate: step 9/9. Functionally, catalyzes the sequential NAD-dependent oxidations of L-histidinol to L-histidinaldehyde and then to L-histidine. In Methylococcus capsulatus (strain ATCC 33009 / NCIMB 11132 / Bath), this protein is Histidinol dehydrogenase.